The following is a 359-amino-acid chain: Peroxisome assembly protein 12 (359 aa).

The Peroxisomal matrix segment spans residues 1-24; sequence MSTTIRASQLASSISPKTEEKQPS. A helical membrane pass occupies residues 25 to 52; the sequence is VFDIIAQENLATSIRPALQHLVKYLAFF. The Cytoplasmic portion of the chain corresponds to 53–56; it reads KPKT. Residues 57–81 form a helical membrane-spanning segment; it reads FLSVHRNFDEYYIIFDLILQNHYLR. The Peroxisomal matrix segment spans residues 82 to 106; it reads NYGASFTENFYSMKRIASGTGNPPN. Residues 107–128 form a helical membrane-spanning segment; that stretch reads DGRERIMSLITLVGWPYVENKL. Over 129–133 the chain is Cytoplasmic; sequence NQLYD. A helical membrane pass occupies residues 134–184; the sequence is RLKEVYECRSWSSINGMKAKCQKMFVIIWPYIKTALKAVKSALQLAYILNR. Over 185 to 253 the chain is Peroxisomal matrix; sequence SSIHSPWLYF…ILGLPGIVSR (69 aa). Residues 254–281 traverse the membrane as a helical segment; the sequence is LFAYGLFFVQFLDYMYNTDLAKLTKTGL. At 282 to 359 the chain is on the cytoplasmic side; the sequence is DGAIPSPPHK…NVQHLIRLFV (78 aa). Residues Cys-307, Cys-310, Cys-328, and Cys-331 each coordinate Zn(2+). The RING-type; degenerate zinc-finger motif lies at 307–346; it reads CPICLKKRVNDTALFVSGYVFCYTCINQYVNTYNKCPVTG.

It belongs to the pex2/pex10/pex12 family. Component of the PEX2-PEX10-PEX12 retrotranslocation channel.

It is found in the peroxisome membrane. Its pathway is protein modification; protein ubiquitination. In terms of biological role, component of a retrotranslocation channel required for peroxisome organization by mediating export of the PEX5/prx-5 receptor from peroxisomes to the cytosol, thereby promoting PEX5/prx-5 recycling. The retrotranslocation channel is composed of PEX2/prx-2, PEX10/prx-10 and PEX12/prx-12; each subunit contributing transmembrane segments that coassemble into an open channel that specifically allows the passage of PEX5/prx-5 through the peroxisomal membrane. PEX12/prx-12 also regulates PEX5/prx-5 recycling by activating the E3 ubiquitin-protein ligase activity of PEX10/prx-10. When PEX5 recycling is compromised, PEX12/prx-12 stimulates PEX10-mediated polyubiquitination of PEX5/prx-5, leading to its subsequent degradation. The protein is Peroxisome assembly protein 12 (prx-12) of Caenorhabditis elegans.